The sequence spans 270 residues: MRTVFIVSDGTGITAETFSHSILAQFEMRFRKVRMPFVDTPDKAHVAVGKINEAFYNEGVPPIVFTTLVNAESNKAIRRAKAMILDMFQTFIEPLEKELGLKSTHAIGRFHQNADTEAYKNRIEAINFSLAHDDGQSHKNLEDADVILVGVSRSGKTPTSLYLAMQYGLKAANYPLIPDDFERGRLPSALYAYKQKIFGLSIDPQRLTEIRNERRPGSKYAAVENCRYEVNEAESMMRREGIKWLSSTHKSIEEIATTILQEIKVDRDNY.

150 to 157 serves as a coordination point for ADP; that stretch reads GVSRSGKT.

Belongs to the pyruvate, phosphate/water dikinase regulatory protein family. PSRP subfamily.

The enzyme catalyses [pyruvate, water dikinase] + ADP = [pyruvate, water dikinase]-phosphate + AMP + H(+). It catalyses the reaction [pyruvate, water dikinase]-phosphate + phosphate + H(+) = [pyruvate, water dikinase] + diphosphate. Functionally, bifunctional serine/threonine kinase and phosphorylase involved in the regulation of the phosphoenolpyruvate synthase (PEPS) by catalyzing its phosphorylation/dephosphorylation. This chain is Putative phosphoenolpyruvate synthase regulatory protein, found in Cupriavidus metallidurans (strain ATCC 43123 / DSM 2839 / NBRC 102507 / CH34) (Ralstonia metallidurans).